Here is a 953-residue protein sequence, read N- to C-terminus: MSKKRLHEIAKEIGKSSKEVVEHAKYLGLDVKSHASSVEEADAKKIISSFSKASKPDVTASQTVKPKEVAQPSVTVVKETGSEHVEKTQVSKPKSRNFKAEREARAKEQAARKQANGSSHRSQERRGGYRQPNNHQTNEQGDKRITHRSQGDTNDKRIERKASNVSPRHDNHQLVGDRNRSFAKENHKNGRFTNQKKQGRQEPQSKSPKIDFKARAAALKAEQNAEYSRQSETRFRAQQEAKRLAELARQEAKEAALKAQAEEMSHREAALKSIEEAETKLKSSNISAKSTADNRRKKQARPEKNRELTHHSQEGQKKNKKSWNSQNQVRNQKNSNWNKNKKTKKGKNVKNTNTAPKPVTERKFHELPKEFEYTEGMTVAEIAKRIKREPAEIVKKLFMMGVMATQNQSLDGDTIELLMVDYGIEAKAKVEVDDADIERFFEDENYLNPENIVERAPVVTIMGHVDHGKTTLLDTLRNSRVATGEAGGITQHIGAYQIEEAGKKITFLDTPGHAAFTSMRARGASVTDITILIVAADDGVMPQTIEAINHSKAAGVPIIVAINKIDKPGANPERVIAELAEYGIISTAWGGECEFVEISAKFNKNIDELLETVLLVAEVEELKADPTVRAIGTVIEARLDKGKGAIATLLVQQGTLHVQDPIVVGNTFGRVRAMVNDLGRRVKSAEPSTPVSITGLNETPMAGDHFAVYADEKAARAAGEERSKRALLKQRQNTQRVSLDNLFDTLKAGEIKTVNVIIKADVQGSVEALAASLVKIEVEGVRVNVVHSAVGAINESDVTLAEASNAVIIGFNVRPTPQARQQADTDDVEIRLHSIIYKVIEEVEEAMKGKLDPVYQEKILGEAIIRETFKVSKVGTIGGFMVINGKVTRDSSVRVIRDSVVIFDGKLASLKHYKDDVKEVGNAQEGGLMIENFNDLKVDDTIEAYIMEEIVRK.

Disordered stretches follow at residues 48–240 and 279–363; these read SSFS…AQQE and TKLK…TERK. Composition is skewed to basic and acidic residues over residues 80 to 89, 98 to 111, and 140 to 188; these read TGSEHVEKTQ, FKAEREARAKEQAA, and QGDK…ENHK. A compositionally biased stretch (polar residues) spans 191–207; sequence RFTNQKKQGRQEPQSKS. A compositionally biased stretch (basic and acidic residues) spans 229-240; sequence RQSETRFRAQQE. The segment covering 282 to 291 has biased composition (polar residues); that stretch reads KSSNISAKST. A compositionally biased stretch (basic and acidic residues) spans 300 to 317; the sequence is ARPEKNRELTHHSQEGQK. Low complexity predominate over residues 322 to 338; it reads SWNSQNQVRNQKNSNWN. Over residues 339 to 348 the composition is skewed to basic residues; sequence KNKKTKKGKN. One can recognise a tr-type G domain in the interval 454 to 623; the sequence is ERAPVVTIMG…LLVAEVEELK (170 aa). The segment at 463–470 is G1; sequence GHVDHGKT. GTP is bound at residue 463-470; sequence GHVDHGKT. Residues 488 to 492 form a G2 region; that stretch reads GITQH. The segment at 509–512 is G3; sequence DTPG. Residues 509-513 and 563-566 each bind GTP; these read DTPGH and NKID. The G4 stretch occupies residues 563–566; that stretch reads NKID. The interval 599-601 is G5; it reads SAK.

This sequence belongs to the TRAFAC class translation factor GTPase superfamily. Classic translation factor GTPase family. IF-2 subfamily.

It is found in the cytoplasm. In terms of biological role, one of the essential components for the initiation of protein synthesis. Protects formylmethionyl-tRNA from spontaneous hydrolysis and promotes its binding to the 30S ribosomal subunits. Also involved in the hydrolysis of GTP during the formation of the 70S ribosomal complex. This chain is Translation initiation factor IF-2, found in Streptococcus pyogenes serotype M1.